Consider the following 135-residue polypeptide: Nucleoside diphosphate kinase (135 aa).

Residues lysine 9, tyrosine 57, arginine 85, threonine 91, arginine 102, and asparagine 112 each contribute to the ATP site. The Pros-phosphohistidine intermediate role is filled by histidine 115.

This sequence belongs to the NDK family. In terms of assembly, homotetramer. Requires Mg(2+) as cofactor.

It localises to the cytoplasm. The catalysed reaction is a 2'-deoxyribonucleoside 5'-diphosphate + ATP = a 2'-deoxyribonucleoside 5'-triphosphate + ADP. The enzyme catalyses a ribonucleoside 5'-diphosphate + ATP = a ribonucleoside 5'-triphosphate + ADP. Its function is as follows. Major role in the synthesis of nucleoside triphosphates other than ATP. The ATP gamma phosphate is transferred to the NDP beta phosphate via a ping-pong mechanism, using a phosphorylated active-site intermediate. This is Nucleoside diphosphate kinase from Thermoanaerobacter pseudethanolicus (strain ATCC 33223 / 39E) (Clostridium thermohydrosulfuricum).